The chain runs to 208 residues: MAVYVVDHPLVKHKLGRLRQHDVPVSEFRAIANELCRLLAYEATKDLETEKVSVQGWAGPVEVDQIKGKKITAVPILRAGLGMLDGFLDMIPGAKVSVVGMFRNEETLEPVQYYTKLAKNIDERMAVILDPMLATGGTLDATIDLLKNAGCPQIKGLFLVAAPEGLKRIVDKHPDVDIYVAAVDERLNEHGYILPGLGDAGDKIFGTK.

Residues arginine 78, arginine 103, and 130-138 contribute to the 5-phospho-alpha-D-ribose 1-diphosphate site; that span reads DPMLATGGT. Uracil-binding positions include isoleucine 193 and 198–200; that span reads GDA. Aspartate 199 serves as a coordination point for 5-phospho-alpha-D-ribose 1-diphosphate.

It belongs to the UPRTase family. It depends on Mg(2+) as a cofactor.

It catalyses the reaction UMP + diphosphate = 5-phospho-alpha-D-ribose 1-diphosphate + uracil. Its pathway is pyrimidine metabolism; UMP biosynthesis via salvage pathway; UMP from uracil: step 1/1. With respect to regulation, allosterically activated by GTP. Catalyzes the conversion of uracil and 5-phospho-alpha-D-ribose 1-diphosphate (PRPP) to UMP and diphosphate. The chain is Uracil phosphoribosyltransferase from Nitratidesulfovibrio vulgaris (strain ATCC 29579 / DSM 644 / CCUG 34227 / NCIMB 8303 / VKM B-1760 / Hildenborough) (Desulfovibrio vulgaris).